Reading from the N-terminus, the 466-residue chain is Cysteine--tRNA ligase (466 aa).

Zn(2+) is bound at residue Cys-28. The 'HIGH' region signature appears at 30 to 40; sequence PTVYNYIHIGN. The Zn(2+) site is built by Cys-208, His-233, and Glu-237. The short motif at 265–269 is the 'KMSKS' region element; the sequence is KMSKS. Lys-268 is an ATP binding site.

Belongs to the class-I aminoacyl-tRNA synthetase family. As to quaternary structure, monomer. Zn(2+) is required as a cofactor.

The protein resides in the cytoplasm. The catalysed reaction is tRNA(Cys) + L-cysteine + ATP = L-cysteinyl-tRNA(Cys) + AMP + diphosphate. In Staphylococcus haemolyticus (strain JCSC1435), this protein is Cysteine--tRNA ligase.